The chain runs to 251 residues: MTAPRAPFFPADRSIRASDDPIEVQHLGTVDYRDSWDLQASLAEQRARDEIADQILVLEHPSVYTAGKRTQPEDLPTNGLPVIEVDRGGRITWHGPGQLVMYPIIKLAEPIDVVDYVRRLEEALIQTVRTFGVPEAGRVDGRSGVWVPAHDGYPDSKVAALGIRVTRGVTMHGLALNCNNTLEFYDHIIACGIEDAGLTTLSRELGRDVPTTELVDPLISDLDDAFAGRLTVADHSFASAPDPTRALPKRG.

The region spanning 49–230 is the BPL/LPL catalytic domain; the sequence is DEIADQILVL…DLDDAFAGRL (182 aa). Substrate is bound by residues 87–94, 160–162, and 173–175; these read RGGRITWH, ALG, and GLA. The active-site Acyl-thioester intermediate is the cysteine 191.

The protein belongs to the LipB family.

The protein resides in the cytoplasm. It catalyses the reaction octanoyl-[ACP] + L-lysyl-[protein] = N(6)-octanoyl-L-lysyl-[protein] + holo-[ACP] + H(+). It participates in protein modification; protein lipoylation via endogenous pathway; protein N(6)-(lipoyl)lysine from octanoyl-[acyl-carrier-protein]: step 1/2. Its function is as follows. Catalyzes the transfer of endogenously produced octanoic acid from octanoyl-acyl-carrier-protein onto the lipoyl domains of lipoate-dependent enzymes. Lipoyl-ACP can also act as a substrate although octanoyl-ACP is likely to be the physiological substrate. In Corynebacterium efficiens (strain DSM 44549 / YS-314 / AJ 12310 / JCM 11189 / NBRC 100395), this protein is Octanoyltransferase.